Here is a 587-residue protein sequence, read N- to C-terminus: Putative adhesin (587 aa).

The N-terminal stretch at 1–19 (MKFAISTLLIILQAAAVFA) is a signal peptide. Cysteines 211 and 261 form a disulfide. N-linked (GlcNAc...) asparagine glycosylation occurs at N239. Tandem repeats lie at residues 432 to 455 (IVTVITKEGGDKYTKTYEEVTYTK), 466 to 489 (IVTVKTKEGGEKVTKTYEEVTYTK), 491 to 512 (PEIVTVVTKEGGEKVTTTYHDV), and 513 to 531 (PEVVTVITKEGGEKVTTTY). A 4 X 24 AA approximate tandem repeats, Thr-rich region spans residues 432–531 (IVTVITKEGG…EGGEKVTTTY (100 aa)). S562 is lipidated: GPI-anchor amidated serine. Positions 563-587 (EAQVNLGSKSAVGLLAIVPMLFLAI) are cleaved as a propeptide — removed in mature form.

In terms of processing, the GPI-anchor is attached to the protein in the endoplasmic reticulum and serves to target the protein to the cell surface. There, the glucosamine-inositol phospholipid moiety is cleaved off and the GPI-modified mannoprotein is covalently attached via its lipidless GPI glycan remnant to the 1,6-beta-glucan of the outer cell wall layer.

It is found in the cell membrane. Its subcellular location is the secreted. The protein localises to the cell wall. Its function is as follows. Putative adhesion protein. May be involved in cell-cell interaction, interacting with other proteins by salt bridges and hydrogen bonds. The polypeptide is Putative adhesin (Komagataella phaffii (strain ATCC 76273 / CBS 7435 / CECT 11047 / NRRL Y-11430 / Wegner 21-1) (Yeast)).